We begin with the raw amino-acid sequence, 162 residues long: MNEETQNAAAQQETGAQFTIQRIYTKDVSFETPNSPAIFQKEWTPEVKLDLDTRSNKLDEGVFEVVLALTVTASIGEETAFLCEIQQAGIFTIADVEETQLAHMLGAFCPNVLFPYAREAVSNLVNRGTFPQLNLAPVNFDALFAQYMQQRTAQAEQASVDA.

Belongs to the SecB family. As to quaternary structure, homotetramer, a dimer of dimers. One homotetramer interacts with 1 SecA dimer.

Its subcellular location is the cytoplasm. Its function is as follows. One of the proteins required for the normal export of preproteins out of the cell cytoplasm. It is a molecular chaperone that binds to a subset of precursor proteins, maintaining them in a translocation-competent state. It also specifically binds to its receptor SecA. The protein is Protein-export protein SecB of Pseudoalteromonas translucida (strain TAC 125).